Reading from the N-terminus, the 296-residue chain is 4-hydroxy-tetrahydrodipicolinate synthase (296 aa).

Residue T44 participates in pyruvate binding. Y132 acts as the Proton donor/acceptor in catalysis. The active-site Schiff-base intermediate with substrate is K162. I204 is a pyruvate binding site.

Belongs to the DapA family. Homotetramer; dimer of dimers.

The protein localises to the cytoplasm. The enzyme catalyses L-aspartate 4-semialdehyde + pyruvate = (2S,4S)-4-hydroxy-2,3,4,5-tetrahydrodipicolinate + H2O + H(+). The protein operates within amino-acid biosynthesis; L-lysine biosynthesis via DAP pathway; (S)-tetrahydrodipicolinate from L-aspartate: step 3/4. Functionally, catalyzes the condensation of (S)-aspartate-beta-semialdehyde [(S)-ASA] and pyruvate to 4-hydroxy-tetrahydrodipicolinate (HTPA). This Novosphingobium aromaticivorans (strain ATCC 700278 / DSM 12444 / CCUG 56034 / CIP 105152 / NBRC 16084 / F199) protein is 4-hydroxy-tetrahydrodipicolinate synthase.